Here is a 76-residue protein sequence, read N- to C-terminus: FMRFamide-related neuropeptides (76 aa).

Positions 1-27 (MCVQTRMLVAVAVVLVVLAVLSDPVSA) are cleaved as a signal peptide. The residue at position 39 (F39) is a Phenylalanine amide.

It belongs to the FARP (FMRFamide related peptide) family. As to expression, olfactory lobe and accessory lobe, olfactory globular tract, olfactory lobe cells (at protein level). Widely distributed throughout nervous system.

It localises to the secreted. In terms of biological role, GYRKPPFNGSIF-amide may be involved in olfaction and contraction of hindgut. This is FMRFamide-related neuropeptides from Procambarus clarkii (Red swamp crayfish).